The primary structure comprises 400 residues: Cytochrome P450 BJ-1 homolog (400 aa).

Cys349 provides a ligand contact to heme.

It belongs to the cytochrome P450 family. It depends on heme as a cofactor.

Its function is as follows. Cytochromes P450 are a group of heme-thiolate monooxygenases. They oxidize a variety of structurally unrelated compounds, including steroids, fatty acids, and xenobiotics. The chain is Cytochrome P450 BJ-1 homolog (cyp112A2) from Sinorhizobium fredii (strain NBRC 101917 / NGR234).